A 101-amino-acid chain; its full sequence is Small ribosomal subunit protein uS14 (101 aa).

Residues 48-69 (LSKLPRDSSPSRHRSRCELSGR) form a disordered region. Residues 51-68 (LPRDSSPSRHRSRCELSG) show a composition bias toward basic and acidic residues.

This sequence belongs to the universal ribosomal protein uS14 family. As to quaternary structure, part of the 30S ribosomal subunit. Contacts proteins S3 and S10.

Functionally, binds 16S rRNA, required for the assembly of 30S particles and may also be responsible for determining the conformation of the 16S rRNA at the A site. This Stenotrophomonas maltophilia (strain R551-3) protein is Small ribosomal subunit protein uS14.